The following is a 1154-amino-acid chain: PDZ domain-containing protein 8 (1154 aa).

Residues 2–24 (GLLLMILASAVLGSFLTLLAQFF) traverse the membrane as a helical segment. Residues 66 to 90 (DEEPSGAAPEGGATPTAAPETPAPP) form a disordered region. The segment covering 70–85 (SGAAPEGGATPTAAPE) has biased composition (low complexity). Positions 91–294 (TRETCYFLNA…LPNYKIRFKP (204 aa)) constitute an SMP-LTD domain. The PDZ domain occupies 366–449 (TVELIKGNLQ…RVLVYYERPV (84 aa)). 3 positions are modified to phosphoserine: serine 496, serine 521, and serine 538. The segment at 548-612 (GSHPLPPKIQ…SADAPNQAEP (65 aa)) is disordered. Residues 840 to 891 (KHSFQDTQFQNPTWCDYCKKKVWTKAASQCMFCAYVCHKKCQEKCLAETSVC) form a Phorbol-ester/DAG-type zinc finger. Positions 955-999 (RLSEPGTDLVEPSPKHTPNTSDNEGSDTEVCGPNSPSKRGNSTGI) are disordered. Serine 967 and serine 980 each carry phosphoserine. A compositionally biased stretch (polar residues) spans 988 to 998 (NSPSKRGNSTG). Residues 1028-1063 (PTEERIQKLEFMLDKLQNEIDQELEHNNSLVREEKE) are a coiled coil. Over residues 1132–1144 (SQLIDSQPFSSIS) the composition is skewed to polar residues. Positions 1132 to 1154 (SQLIDSQPFSSISDDLFGPSESV) are disordered.

Interacts with MSN. As to quaternary structure, (Microbial infection) Interacts with HIV-1 Gag polyprotein p55.

The protein resides in the endoplasmic reticulum membrane. Molecular tethering protein that connects endoplasmic reticulum and mitochondria membranes. PDZD8-dependent endoplasmic reticulum-mitochondria membrane tethering is essential for endoplasmic reticulum-mitochondria Ca(2+) transfer. In neurons, involved in the regulation of dendritic Ca(2+) dynamics by regulating mitochondrial Ca(2+) uptake in neurons. Plays an indirect role in the regulation of cell morphology and cytoskeletal organization. May inhibit herpes simplex virus 1 infection at an early stage. This Homo sapiens (Human) protein is PDZ domain-containing protein 8.